Reading from the N-terminus, the 425-residue chain is Serine--tRNA ligase (425 aa).

Position 230–232 (230–232 (TAE)) interacts with L-serine. 261 to 263 (RSE) lines the ATP pocket. E284 lines the L-serine pocket. ATP is bound at residue 348 to 351 (EISS). S384 lines the L-serine pocket.

The protein belongs to the class-II aminoacyl-tRNA synthetase family. Type-1 seryl-tRNA synthetase subfamily. As to quaternary structure, homodimer. The tRNA molecule binds across the dimer.

It localises to the cytoplasm. The enzyme catalyses tRNA(Ser) + L-serine + ATP = L-seryl-tRNA(Ser) + AMP + diphosphate + H(+). It catalyses the reaction tRNA(Sec) + L-serine + ATP = L-seryl-tRNA(Sec) + AMP + diphosphate + H(+). Its pathway is aminoacyl-tRNA biosynthesis; selenocysteinyl-tRNA(Sec) biosynthesis; L-seryl-tRNA(Sec) from L-serine and tRNA(Sec): step 1/1. Its function is as follows. Catalyzes the attachment of serine to tRNA(Ser). Is also able to aminoacylate tRNA(Sec) with serine, to form the misacylated tRNA L-seryl-tRNA(Sec), which will be further converted into selenocysteinyl-tRNA(Sec). This chain is Serine--tRNA ligase, found in Streptococcus equi subsp. equi (strain 4047).